Here is an 839-residue protein sequence, read N- to C-terminus: Taste receptor type 1 member 2 (839 aa).

Residues 1 to 19 (MGPRAKTICSLFFLLWVLA) form the signal peptide. The Extracellular portion of the chain corresponds to 20–566 (EPAENSDFYL…VFLEWHEAPT (547 aa)). N-linked (GlcNAc...) asparagine glycosylation is found at N84, N248, N292, N312, N368, N407, N428, N487, and N527. The helical transmembrane segment at 567–587 (IAVALLAALGFLSTLAILVIF) threads the bilayer. At 588–602 (WRHFQTPIVRSAGGP) the chain is on the cytoplasmic side. The helical transmembrane segment at 603-623 (MCFLMLTLLLVAYMVVPVYVG) threads the bilayer. The Extracellular segment spans residues 624-635 (PPKVSTCLCRQA). The chain crosses the membrane as a helical span at residues 636 to 656 (LFPLCFTICISCIAVRSFQIV). Over 657-681 (CAFKMASRFPRAYSYWVRYQGPYVS) the chain is Cytoplasmic. A helical transmembrane segment spans residues 682–702 (MAFITVLKMVIVVIGMLATGL). The Extracellular segment spans residues 703–727 (SPTTRTDPDDPKITIVSCNPNYRNS). The helical transmembrane segment at 728–748 (LLFNTSLDLLLSVVGFSFAYM) threads the bilayer. At 749-760 (GKELPTNYNEAK) the chain is on the cytoplasmic side. The chain crosses the membrane as a helical span at residues 761-781 (FITLSMTFYFTSSVSLCTFMS). The Extracellular portion of the chain corresponds to 782–784 (AYS). The chain crosses the membrane as a helical span at residues 785–805 (GVLVTIVDLLVTVLNLLAISL). At 806 to 839 (GYFGPKCYMILFYPERNTSAYFNSMIQGYTMRRD) the chain is on the cytoplasmic side.

This sequence belongs to the G-protein coupled receptor 3 family. TAS1R subfamily. In terms of assembly, forms heterodimers with TAS1R3.

The protein resides in the cell membrane. Putative taste receptor. TAS1R2/TAS1R3 recognizes diverse natural and synthetic sweeteners. This is Taste receptor type 1 member 2 (TAS1R2) from Pan troglodytes (Chimpanzee).